Reading from the N-terminus, the 349-residue chain is T-cell immunoglobulin and mucin domain-containing protein 2 (349 aa).

A signal peptide spans 1–20; sequence MVQLQVFISGLLLLLPGAVA. The Extracellular segment spans residues 21-275; the sequence is SYTVVQGHSV…QKLQRNPTKG (255 aa). Residues 22–123 form the Ig-like V-type domain; that stretch reads YTVVQGHSVT…AFYFVDYLLE (102 aa). Disulfide bonds link Cys34/Cys107, Cys48/Cys59, and Cys54/Cys106. Asn84 and Asn89 each carry an N-linked (GlcNAc...) asparagine glycan. Positions 128 to 271 are disordered; it reads LPTSPPTRPT…AIPPQKLQRN (144 aa). The span at 136–215 shows a compositional bias: low complexity; it reads PTNTGRPTTT…TSTPPTPEQT (80 aa). Over residues 222–260 the composition is skewed to polar residues; sequence ATTYYPDQTTAEVTEAPSHTPTDWNNTATSSDDSWNSDT. A helical membrane pass occupies residues 276–296; sequence FYVGMSFAALLLLLLASTVAI. The Cytoplasmic portion of the chain corresponds to 297-349; the sequence is TRYMVMRKNSGSLRFVAFPVSKIGASQNKVVEQARIEDEVYIIEDSPYFEEES.

This sequence belongs to the immunoglobulin superfamily. TIM family. As to quaternary structure, homodimer.

The protein resides in the cell membrane. Its function is as follows. Probable receptor for SEMA4A involved in the regulation of T-cell function. The interaction with SEMA4A enhances T-cell activation. The chain is T-cell immunoglobulin and mucin domain-containing protein 2 (Timd2) from Rattus norvegicus (Rat).